The chain runs to 178 residues: Deoxycytidylate deaminase (178 aa).

Residues 14 to 145 (EWPEYFMAVA…DEATAARLLF (132 aa)) enclose the CMP/dCMP-type deaminase domain. H84 provides a ligand contact to Zn(2+). E86 acts as the Proton donor in catalysis. Zn(2+) contacts are provided by C110 and C113. The residue at position 174 (S174) is a Phosphoserine.

It belongs to the cytidine and deoxycytidylate deaminase family. In terms of assembly, homohexamer. It depends on Zn(2+) as a cofactor.

The enzyme catalyses dCMP + H2O + H(+) = dUMP + NH4(+). It carries out the reaction 5-hydroxymethyl-dCMP + H2O + H(+) = 5-hydroxymethyl-dUMP + NH4(+). Allosteric enzyme whose activity is greatly influenced by the end products of its metabolic pathway, dCTP and dTTP. Functionally, catalyzes the deamination of dCMP to dUMP, providing the nucleoside monophosphate substrate for the thymidylate synthase/TYMS. Also, part of a nucleotide salvage pathway that eliminates epigenetically modified 5-hydroxymethyl-dCMP (hmdCMP) in a two-step process entailing deamination to cytotoxic 5-hydroxymethyl-dUMP (hmdUMP), followed by its hydrolysis into 5-hydroxymethyluracil (hmU) and 2-deoxy-D-ribose 5-phosphate (deoxyribosephosphate). Catalyzes the first step in that pathway, the deamination of 5-hydroxymethyl-dCMP (hmdCMP). In Homo sapiens (Human), this protein is Deoxycytidylate deaminase.